A 911-amino-acid polypeptide reads, in one-letter code: Zinc finger protein 721 (911 aa).

The C2H2-type 1; degenerate zinc-finger motif lies at 69–91 (FQCNARVKVFSKFANSNKDKTRH). Residues 97-119 (FKCNECGKSFQKFSDLTQHKGIH) form a C2H2-type 2 zinc finger. The C2H2-type 3; degenerate zinc-finger motif lies at 125–147 (YTCEERGKDFGWYTDLNQHKKIH). Residues 153 to 175 (YKCEECGKAFNRSTNLTAHKRIH) form a C2H2-type 4 zinc finger. Residues 181–203 (YTGEDRDRAFGWSTNLNEYKKIH) form a C2H2-type 5; degenerate zinc finger. C2H2-type zinc fingers lie at residues 209-231 (YKCK…EKIH), 237-259 (YKCK…KRIH), 265-287 (FKCL…RRIH), 293-315 (YTCE…RRIH), 321-343 (YTCG…RRIH), 349-371 (YKCE…KKIH), and 377-399 (YKCE…KRIH). The segment at 405–427 (YTCEDRGRAFGLSTNLNEYKKIH) adopts a C2H2-type 13; degenerate zinc-finger fold. 6 C2H2-type zinc fingers span residues 433–455 (YKCK…EKIH), 461–483 (YKCK…KRIH), 489–511 (FECL…RRIH), 517–539 (YTCE…RRIH), 545–567 (YTCE…RRIH), and 573–595 (YKCE…KKIH). Residue Lys-478 forms a Glycyl lysine isopeptide (Lys-Gly) (interchain with G-Cter in SUMO2) linkage. The segment at 601–623 (YKCEECGKDFVWYTDLNQQKKIY) adopts a C2H2-type 20; degenerate zinc-finger fold. The segment at 629–651 (YKCEECGKAFAPSTDLNQHTKIL) adopts a C2H2-type 21; degenerate zinc-finger fold. Residue Lys-649 forms a Glycyl lysine isopeptide (Lys-Gly) (interchain with G-Cter in SUMO2) linkage. 2 consecutive C2H2-type zinc fingers follow at residues 657 to 679 (YKCE…KKIH) and 685 to 707 (YKCE…RRVH). The segment at 713–735 (YKCEDRGRSFGWSTNLNEYKKIH) adopts a C2H2-type 24; degenerate zinc-finger fold. C2H2-type zinc fingers lie at residues 741 to 763 (YKCK…EKIH), 769 to 791 (YKCK…KRIH), 797 to 819 (FKCL…RRIH), 825 to 847 (YTCE…RRIH), 853 to 875 (YTCG…KKIH), and 881 to 903 (YTCG…KKIH). A Glycyl lysine isopeptide (Lys-Gly) (interchain with G-Cter in SUMO2) cross-link involves residue Lys-786.

It belongs to the krueppel C2H2-type zinc-finger protein family.

It is found in the nucleus. Its function is as follows. May be involved in transcriptional regulation. The sequence is that of Zinc finger protein 721 (ZNF721) from Homo sapiens (Human).